Reading from the N-terminus, the 202-residue chain is Probable ATP-dependent Clp protease proteolytic subunit 3 (202 aa).

S101 acts as the Nucleophile in catalysis. H126 is a catalytic residue.

This sequence belongs to the peptidase S14 family. As to quaternary structure, fourteen ClpP subunits assemble into 2 heptameric rings which stack back to back to give a disk-like structure with a central cavity, resembling the structure of eukaryotic proteasomes.

It localises to the cytoplasm. The catalysed reaction is Hydrolysis of proteins to small peptides in the presence of ATP and magnesium. alpha-casein is the usual test substrate. In the absence of ATP, only oligopeptides shorter than five residues are hydrolyzed (such as succinyl-Leu-Tyr-|-NHMec, and Leu-Tyr-Leu-|-Tyr-Trp, in which cleavage of the -Tyr-|-Leu- and -Tyr-|-Trp bonds also occurs).. Cleaves peptides in various proteins in a process that requires ATP hydrolysis. Has a chymotrypsin-like activity. Plays a major role in the degradation of misfolded proteins. The chain is Probable ATP-dependent Clp protease proteolytic subunit 3 from Synechocystis sp. (strain ATCC 27184 / PCC 6803 / Kazusa).